We begin with the raw amino-acid sequence, 332 residues long: Holliday junction branch migration complex subunit RuvB (332 aa).

Residues 1 to 181 are large ATPase domain (RuvB-L); it reads MTRFLDSDAM…FGITGHMEYY (181 aa). ATP contacts are provided by residues Leu-20, Arg-21, Gly-62, Lys-65, Thr-66, Thr-67, 128–130, Arg-171, Tyr-181, and Arg-218; that span reads EDF. Thr-66 serves as a coordination point for Mg(2+). Residues 182-252 are small ATPAse domain (RuvB-S); it reads EENDLTEIIE…ITDKALTMLD (71 aa). The head domain (RuvB-H) stretch occupies residues 255–332; sequence HEGLDYVDQK…EHLGYQRFDK (78 aa). Positions 291, 310, 312, and 315 each coordinate DNA.

It belongs to the RuvB family. In terms of assembly, homohexamer. Forms an RuvA(8)-RuvB(12)-Holliday junction (HJ) complex. HJ DNA is sandwiched between 2 RuvA tetramers; dsDNA enters through RuvA and exits via RuvB. An RuvB hexamer assembles on each DNA strand where it exits the tetramer. Each RuvB hexamer is contacted by two RuvA subunits (via domain III) on 2 adjacent RuvB subunits; this complex drives branch migration. In the full resolvosome a probable DNA-RuvA(4)-RuvB(12)-RuvC(2) complex forms which resolves the HJ.

The protein resides in the cytoplasm. The catalysed reaction is ATP + H2O = ADP + phosphate + H(+). The RuvA-RuvB-RuvC complex processes Holliday junction (HJ) DNA during genetic recombination and DNA repair, while the RuvA-RuvB complex plays an important role in the rescue of blocked DNA replication forks via replication fork reversal (RFR). RuvA specifically binds to HJ cruciform DNA, conferring on it an open structure. The RuvB hexamer acts as an ATP-dependent pump, pulling dsDNA into and through the RuvAB complex. RuvB forms 2 homohexamers on either side of HJ DNA bound by 1 or 2 RuvA tetramers; 4 subunits per hexamer contact DNA at a time. Coordinated motions by a converter formed by DNA-disengaged RuvB subunits stimulates ATP hydrolysis and nucleotide exchange. Immobilization of the converter enables RuvB to convert the ATP-contained energy into a lever motion, pulling 2 nucleotides of DNA out of the RuvA tetramer per ATP hydrolyzed, thus driving DNA branch migration. The RuvB motors rotate together with the DNA substrate, which together with the progressing nucleotide cycle form the mechanistic basis for DNA recombination by continuous HJ branch migration. Branch migration allows RuvC to scan DNA until it finds its consensus sequence, where it cleaves and resolves cruciform DNA. In Streptococcus agalactiae serotype V (strain ATCC BAA-611 / 2603 V/R), this protein is Holliday junction branch migration complex subunit RuvB.